A 249-amino-acid polypeptide reads, in one-letter code: PF03932 family protein CutC (249 aa).

The protein belongs to the CutC family.

Its subcellular location is the cytoplasm. The protein is PF03932 family protein CutC of Bacteroides thetaiotaomicron (strain ATCC 29148 / DSM 2079 / JCM 5827 / CCUG 10774 / NCTC 10582 / VPI-5482 / E50).